A 121-amino-acid chain; its full sequence is Huntingtin-interacting protein K (121 aa).

Acidic residues predominate over residues 1–13; the sequence is MATEGDVELELET. The disordered stretch occupies residues 1–75; the sequence is MATEGDVELE…EQKAKQEREK (75 aa). Composition is skewed to basic and acidic residues over residues 20-47 and 60-75; these read RPPEKPRKHDSGAADLERVTDYAEEKEI and GDRRSREQKAKQEREK. The residue at position 30 (Ser30) is a Phosphoserine. The interval 52–121 is required for association with the NAA10-NAA15 complex; that stretch reads LETAMSVIGD…VVEALIALTN (70 aa). The stretch at 62–107 forms a coiled coil; sequence RRSREQKAKQEREKELAKVTIKKEDLELIMTEMEISRAAAERSLRE.

In terms of assembly, component of the N-terminal acetyltransferase A (NatA)/HYPK complex at least composed of NAA10, NAA15 and HYPK, which has N-terminal acetyltransferase activity. Within the complex interacts with NAA10. Within the complex interacts with NAA15. Predominantly interacts with NAA15 in the NAA10-NAA15 complex (also called the NatA complex); the interaction with the NatA complex reduces the acetylation activity of the NatA complex. Interacts with HTT (via N-terminus). The NatA complex is required for HYPK stability and for reducing polyQ aggregation of HTT. Component of the N-terminal acetyltransferase E (NatE)/HYPK complex at least composed of NAA10, NAA15, NAA50 and HYPK. Within the complex interacts with NAA10 and NAA15. Does not interact with NAA50. Interaction with NAA15 reduces the capacity of NAA15 to interact with NAA50. Its capacity to interact with the NatA complex is reduced by NAA50. Does not interact with the N-terminal acetyltransferase B (NatB) complex component NAA25 or the N-terminal acetyltransferase C (NatC) complex component NAA35.

The protein localises to the nucleus. It localises to the cytoplasm. Functionally, component of several N-terminal acetyltransferase complexes. Inhibits the N-terminal acetylation activity of the N-terminal acetyltransferase NAA10-NAA15 complex (also called the NatA complex). Has chaperone-like activity preventing polyglutamine (polyQ) aggregation of HTT in neuronal cells probably while associated with the NatA complex. May play a role in the NatA complex-mediated N-terminal acetylation of PCNP. The polypeptide is Huntingtin-interacting protein K (Homo sapiens (Human)).